Consider the following 219-residue polypeptide: UPF0502 protein Swoo_2055 (219 aa).

The interval 167 to 195 is disordered; the sequence is QVKGESVPISEHSRSQREAPSKRQDEMDE. A compositionally biased stretch (basic and acidic residues) spans 177–191; it reads EHSRSQREAPSKRQD.

The protein belongs to the UPF0502 family.

The chain is UPF0502 protein Swoo_2055 from Shewanella woodyi (strain ATCC 51908 / MS32).